The following is a 422-amino-acid chain: Synaptotagmin-15 (422 aa).

Topologically, residues 1-4 are extracellular; that stretch reads MAEQ. Residues 5–27 traverse the membrane as a helical; Signal-anchor for type III membrane protein segment; the sequence is LALVIGCIIGGLLLLIGISCCLW. At 28 to 422 the chain is on the cytoplasmic side; it reads KRLCTTFTYE…WHALCRPMEP (395 aa). 2 C2 domains span residues 148-267 and 279-400; these read CLGR…VIWR and EFGD…EHWN.

It belongs to the synaptotagmin family. As to quaternary structure, homodimer.

The protein localises to the membrane. Functionally, may be involved in the trafficking and exocytosis of secretory vesicles in non-neuronal tissues. In Rattus norvegicus (Rat), this protein is Synaptotagmin-15 (Syt15).